Reading from the N-terminus, the 284-residue chain is GPN-loop GTPase 3 (284 aa).

Position 13 to 18 (glycine 13 to threonine 18) interacts with GTP. Positions glycine 72–asparagine 74 match the Gly-Pro-Asn (GPN)-loop; involved in dimer interface motif. Threonine 174–aspartate 177 contacts GTP. The tract at residues lysine 261–glutamate 284 is disordered.

It belongs to the GPN-loop GTPase family. As to quaternary structure, heterodimer with GPN1. Binds to RNA polymerase II (RNAPII). Interacts directly with subunits RPB4 and RPB7 and the CTD of RPB1.

Its function is as follows. Small GTPase required for proper localization of RNA polymerase II (RNAPII). May act at an RNAP assembly step prior to nuclear import. In Bos taurus (Bovine), this protein is GPN-loop GTPase 3.